Consider the following 357-residue polypeptide: DNA primase small subunit PriS (357 aa).

Active-site residues include aspartate 105, aspartate 107, and aspartate 259.

This sequence belongs to the eukaryotic-type primase small subunit family. As to quaternary structure, heterodimer of a small subunit (PriS) and a large subunit (PriL). Mg(2+) serves as cofactor. Mn(2+) is required as a cofactor.

Catalytic subunit of DNA primase, an RNA polymerase that catalyzes the synthesis of short RNA molecules used as primers for DNA polymerase during DNA replication. The small subunit contains the primase catalytic core and has DNA synthesis activity on its own. Binding to the large subunit stabilizes and modulates the activity, increasing the rate of DNA synthesis while decreasing the length of the DNA fragments, and conferring RNA synthesis capability. The DNA polymerase activity may enable DNA primase to also catalyze primer extension after primer synthesis. May also play a role in DNA repair. The polypeptide is DNA primase small subunit PriS (Methanococcus maripaludis (strain C6 / ATCC BAA-1332)).